A 777-amino-acid chain; its full sequence is Semaphorin-3D (777 aa).

Positions Met-1–Thr-37 are cleaved as a signal peptide. A Sema domain is found at Arg-44 to Leu-531. Cysteines 117 and 128 form a disulfide. A glycan (N-linked (GlcNAc...) asparagine) is linked at Asn-139. Cystine bridges form between Cys-146–Cys-155, Cys-286–Cys-398, Cys-310–Cys-358, and Cys-534–Cys-552. The region spanning Arg-533–Trp-585 is the PSI domain. Residues Ser-592–Thr-680 form the Ig-like C2-type domain. N-linked (GlcNAc...) asparagine glycosylation is found at Asn-607 and Asn-724. A disulfide bridge connects residues Cys-665 and Cys-731. A compositionally biased stretch (basic residues) spans Arg-740–His-765. The interval Arg-740 to Thr-777 is disordered. A compositionally biased stretch (basic and acidic residues) spans Arg-766–Thr-777.

The protein belongs to the semaphorin family.

Its subcellular location is the secreted. Its function is as follows. Induces the collapse and paralysis of neuronal growth cones. Could potentially act as repulsive cues toward specific neuronal populations. Binds to neuropilin. The polypeptide is Semaphorin-3D (Sema3d) (Mus musculus (Mouse)).